A 661-amino-acid chain; its full sequence is ATP-dependent RNA helicase vasa (661 aa).

Over residues 1 to 10 (MSDDWDDEPI) the composition is skewed to acidic residues. Residues 1–186 (MSDDWDDEPI…RRRRNEDDIN (186 aa)) form a disordered region. S22 is modified (phosphoserine). Phosphothreonine is present on T27. Gly residues-rich tracts occupy residues 38-52 (DGVG…GYQG) and 60-83 (RIGG…GGFH). A compositionally biased stretch (basic and acidic residues) spans 85-95 (GRREGERDFRG). 5 repeat units span residues 93–99 (FRGGEGG), 100–106 (FRGGQGG), 107–113 (SRGGQGG), 114–120 (SRGGQGG), and 121–127 (FRGGEGG). The segment at 93 to 127 (FRGGEGGFRGGQGGSRGGQGGSRGGQGGFRGGEGG) is 5 X 7 AA tandem repeats of [FS]-R-G-G-[EQ]-G-G. Over residues 96-129 (GEGGFRGGQGGSRGGQGGSRGGQGGFRGGEGGFR) the composition is skewed to gly residues. Positions 131–172 (RLYENEDGDERRGRLDREERGGERRGRLDREERGGERGERGD) are enriched in basic and acidic residues. The short motif at 184-188 (DINNN) is the B30.2/SPRY domain-binding motif element. The segment at 184–203 (DINNNNNIVEDVERKREFYI) is required for posterior localization in oocyte. The short motif at 245–273 (QHFTSADLRDIIIDNVNKSGYKIPTPIQK) is the Q motif element. In terms of domain architecture, Helicase ATP-binding spans 276-453 (IPVISSGRDL…GEFLKNYVFV (178 aa)). An ATP-binding site is contributed by 289–296 (AQTGSGKT). Residues 399–402 (DEAD) carry the DEAD box motif. Residues 477 to 624 (KRSKLIEILS…TVPDFLRTCG (148 aa)) form the Helicase C-terminal domain.

This sequence belongs to the DEAD box helicase family. DDX4/VASA subfamily. As to quaternary structure, interacts with eIF5B and faf. Interacts with gus (via B30.2/SPRY domain) and Fsn (via B30.2/SPRY domain). Interacts with aub, me31B, eIF-4a and TER94. Interacts with piwi; this interaction is RNA independent. Interacts with Dcr-1 and Fmr1; these interactions occur in the polar granules. It depends on Mg(2+) as a cofactor. Ubiquitinated during oogenesis. Deubiquitinated by faf, which protects this protein from proteasome-mediated degradation. Abundantly expressed in the female germline. Gus and faf are required for vas expression in the posterior pole of the oocyte.

Its subcellular location is the cytoplasm. The protein localises to the perinuclear region. It localises to the cytoplasmic ribonucleoprotein granule. It carries out the reaction ATP + H2O = ADP + phosphate + H(+). Involved in translational control mechanisms operating in early stages of oogenesis. Required maternally in many stages of oogenesis, including cystocyte differentiation, oocyte differentiation, and specification of anterior-posterior polarity in the developing cysts. Essential for the formation and/or structural integrity of perinuclear nuage particles during germ cell formation. Required for gus, Fsn and aub accumulation at the posterior pole of the embryo. Required for the localization of vas to the perinuclear region of nurse cells. May have a role in production of piwi-interacting RNA (piRNA). The polypeptide is ATP-dependent RNA helicase vasa (Drosophila melanogaster (Fruit fly)).